We begin with the raw amino-acid sequence, 329 residues long: MAAPAPAGAAASPSPKPQLPSPFAELVKTPSGLEKVVLRGARNCCAEIYLYGGQVTSWKNDNGEELLFLSSKAIFKPPKAIRGGIPICLPQFGTHGNLEQHGFARNRFWSIDNDPPPLPVNPAIKAFVDLILRPAEEDLKIWPHSFEFRLRVALGPSGDLSLTSRIRNTNTDGRPFSYTFAYHTYFFVSDISEVRVEGLETMDYLDNLKAKERFTEQGDAIVFESEVDKVYLAAPSKIAIIDHEKKKTFVVTKEGLPDAVVWNPWDKKAKAMQDFGDAEYKNMLCVEPAAVEKPITLKPGEEWRGRIALSAVPSSYCSGQLDPLKVLHG.

Residues 1-13 are compositionally biased toward low complexity; that stretch reads MAAPAPAGAAASP. A disordered region spans residues 1-20; that stretch reads MAAPAPAGAAASPSPKPQLP. Positions 82, 100, and 105 each coordinate substrate. Residue histidine 183 is part of the active site. Aspartate 228 is a substrate binding site. The active site involves glutamate 287.

It belongs to the glucose-6-phosphate 1-epimerase family.

The enzyme catalyses alpha-D-glucose 6-phosphate = beta-D-glucose 6-phosphate. This Cenchrus ciliaris (Buffelgrass) protein is Putative glucose-6-phosphate 1-epimerase.